Consider the following 424-residue polypeptide: Putative chloroquine resistance transporter (424 aa).

At 1 to 56 the chain is on the cytoplasmic side; it reads MTGMKKGKNKKKNVKNDERYKELDSLISNDSEIGNNSRWGGAKRICKLIGNEMRNN. The helical transmembrane segment at 57–77 threads the bilayer; it reads IYVYLLSILYLCVSVMNKVFS. The Vacuolar portion of the chain corresponds to 78–88; the sequence is KRTLNKIGNYS. N-linked (GlcNAc...) asparagine glycosylation is present at asparagine 86. The helical transmembrane segment at 89-109 threads the bilayer; the sequence is FVTSEVHNMICTIVFQLLYFI. Topologically, residues 110–125 are cytoplasmic; sequence YRKTSNPASRNESQKN. A helical transmembrane segment spans residues 126–146; it reads FGWQFFLISLLDASTVIITMI. The Vacuolar portion of the chain corresponds to 147 to 156; it reads GLTRTTGNIQ. Residues 157–177 form a helical membrane-spanning segment; the sequence is SFIMQLIIPVNMYFCFIFLGY. The Cytoplasmic portion of the chain corresponds to 178–180; it reads RYH. Residues 181-201 form a helical membrane-spanning segment; sequence LFNYLGAFIILITIAAVETVL. At 202–209 the chain is on the vacuolar side; the sequence is SYETQSDN. The helical transmembrane segment at 210-230 threads the bilayer; it reads SIIFNLIMIFALIPLSFSNMT. Residues 231 to 248 lie on the Cytoplasmic side of the membrane; sequence REVVFKKHKINIIRLNAM. The helical transmembrane segment at 249–269 threads the bilayer; sequence VALFQFFTSLLVLPVYNISFL. The Vacuolar portion of the chain corresponds to 270 to 317; the sequence is KEIYMPFSEMGTNINDGLRCLFYGQSTIVENCGVGMVKMCDQCEGAWK. 2 cysteine pairs are disulfide-bonded: cysteine 289/cysteine 312 and cysteine 301/cysteine 309. The chain crosses the membrane as a helical span at residues 318-338; the sequence is TFITYSFFNICDNLLVCYIID. Residues 339-346 lie on the Cytoplasmic side of the membrane; it reads KFSTMTYT. A helical membrane pass occupies residues 347-367; the sequence is IVSCIQGPAITIAYYFKFLAG. Over 368-377 the chain is Vacuolar; sequence DVVRQPRLLD. The helical transmembrane segment at 378–398 threads the bilayer; the sequence is FLTLFGYLLGTIIYRIGNIIL. Residues 399 to 424 lie on the Cytoplasmic side of the membrane; the sequence is EKKKMLKALNTDGSEAELTSIETSTA.

This sequence belongs to the CRT-like transporter family.

The protein resides in the vacuole membrane. Functionally, nutrient transporter. Involved in maintaining the osmotic homeostasis of the digestive vacuole. The polypeptide is Putative chloroquine resistance transporter (Plasmodium chabaudi).